The chain runs to 404 residues: uncharacterized protein (404 aa).

A compositionally biased stretch (polar residues) spans 262–278 (VSTGDTSPYGTEDSSPA). 2 disordered regions span residues 262–307 (VSTG…SPSL) and 320–340 (KKSH…GGAD). Serine 268, serine 276, and serine 279 each carry phosphoserine. A phosphothreonine mark is found at threonine 290 and threonine 293. Serine 304, serine 306, serine 324, serine 358, and serine 362 each carry phosphoserine. The span at 320–336 (KKSHSANDSEEFFREDD) shows a compositional bias: basic and acidic residues.

This is an uncharacterized protein from Rattus norvegicus (Rat).